We begin with the raw amino-acid sequence, 187 residues long: UPF0301 protein Spro_4027 (187 aa).

Belongs to the UPF0301 (AlgH) family.

This is UPF0301 protein Spro_4027 from Serratia proteamaculans (strain 568).